A 279-amino-acid chain; its full sequence is MISISPKALAPGSDKAIEKKLDLTNLTPEQVALDINKLNLFYGKKQALNNITMSIPKGQVTAFIGPSGCGKSTLLRSINRMNDLVDNCHISGEINLHGSNIYDKHVDVAELRRKVGMVFQRPNPFPKTIYENVVYGLRIMGENNRRRLDEAAEQSLRSAALWNEVKDRLHESALGLSGGQQQRLVIARAIAIQPEVLLLDEPTSALDPISTLTIEELINDLKKQFTVVIVTHNMQQAARVSDQTAFMYMGDLIEYSDTNTLFTTPLKKKTEDYITGRYG.

Positions 33-274 constitute an ABC transporter domain; sequence LDINKLNLFY…PLKKKTEDYI (242 aa). An ATP-binding site is contributed by 65 to 72; sequence GPSGCGKS.

It belongs to the ABC transporter superfamily. Phosphate importer (TC 3.A.1.7) family. The complex is composed of two ATP-binding proteins (PstB), two transmembrane proteins (PstC and PstA) and a solute-binding protein (PstS).

It localises to the cell inner membrane. It carries out the reaction phosphate(out) + ATP + H2O = ADP + 2 phosphate(in) + H(+). Part of the ABC transporter complex PstSACB involved in phosphate import. Responsible for energy coupling to the transport system. The sequence is that of Phosphate import ATP-binding protein PstB from Colwellia psychrerythraea (strain 34H / ATCC BAA-681) (Vibrio psychroerythus).